Here is a 686-residue protein sequence, read N- to C-terminus: Aminodeoxychorismate synthase (686 aa).

A Glutamine amidotransferase type-1 domain is found at 2–194 (RTLLIDNYDS…RDLALAHHRA (193 aa)). Residue Cys81 is the Nucleophile of the active site. Catalysis depends on residues His168 and Glu170. The tract at residues 233–686 (LDSSSVLEGA…LDGSAVAGAR (454 aa)) is PABB component.

In the C-terminal section; belongs to the anthranilate synthase component I family.

The catalysed reaction is chorismate + L-glutamine = 4-amino-4-deoxychorismate + L-glutamate. It participates in antibiotic biosynthesis. Functionally, involved in chloramphenicol biosynthesis. Catalyzes the biosynthesis of 4-amino-4-deoxychorismate (ADC) from chorismate and glutamine. This chain is Aminodeoxychorismate synthase, found in Streptomyces venezuelae (strain ATCC 10712 / CBS 650.69 / DSM 40230 / JCM 4526 / NBRC 13096 / PD 04745).